Reading from the N-terminus, the 92-residue chain is Small ribosomal subunit protein uS19 (92 aa).

The protein belongs to the universal ribosomal protein uS19 family.

Its function is as follows. Protein S19 forms a complex with S13 that binds strongly to the 16S ribosomal RNA. This is Small ribosomal subunit protein uS19 from Caulobacter sp. (strain K31).